Here is a 430-residue protein sequence, read N- to C-terminus: tRNA(Ile)-lysidine synthase (430 aa).

21–26 (SGGLDS) provides a ligand contact to ATP.

Belongs to the tRNA(Ile)-lysidine synthase family.

Its subcellular location is the cytoplasm. The catalysed reaction is cytidine(34) in tRNA(Ile2) + L-lysine + ATP = lysidine(34) in tRNA(Ile2) + AMP + diphosphate + H(+). Ligates lysine onto the cytidine present at position 34 of the AUA codon-specific tRNA(Ile) that contains the anticodon CAU, in an ATP-dependent manner. Cytidine is converted to lysidine, thus changing the amino acid specificity of the tRNA from methionine to isoleucine. The chain is tRNA(Ile)-lysidine synthase from Salmonella paratyphi A (strain ATCC 9150 / SARB42).